A 216-amino-acid chain; its full sequence is Maleylacetoacetate isomerase (216 aa).

The residue at position 1 (Met-1) is an N-acetylmethionine. In terms of domain architecture, GST N-terminal spans 4 to 87 (GKPILYSYFR…YLEETRPIPR (84 aa)). Residues 14–19 (SSCSWR) and Gln-45 each bind glutathione. Lys-57 bears the N6-succinyllysine mark. Glutathione is bound by residues Val-59, 71–72 (QS), Gln-111, and 115–117 (NLS). Positions 92 to 212 (DPQKRAIVRM…HPRRQPDTPA (121 aa)) constitute a GST C-terminal domain. Thr-136 is subject to Phosphothreonine. At Ser-137 the chain carries Phosphoserine. Lys-177 carries the N6-succinyllysine modification. The residue at position 181 (Ser-181) is a Phosphoserine.

This sequence belongs to the GST superfamily. Zeta family. Homodimer. The cofactor is glutathione. As to expression, expressed in liver, kidney, seminal glands and breast.

Its subcellular location is the cytoplasm. The catalysed reaction is 4-maleylacetoacetate = 4-fumarylacetoacetate. It catalyses the reaction RX + glutathione = an S-substituted glutathione + a halide anion + H(+). Its pathway is amino-acid degradation; L-phenylalanine degradation; acetoacetate and fumarate from L-phenylalanine: step 5/6. Probable bifunctional enzyme showing minimal glutathione-conjugating activity with ethacrynic acid and 7-chloro-4-nitrobenz-2-oxa-1, 3-diazole and maleylacetoacetate isomerase activity. Also has low glutathione peroxidase activity with t-butyl and cumene hydroperoxides. Is able to catalyze the glutathione dependent oxygenation of dichloroacetic acid to glyoxylic acid. This chain is Maleylacetoacetate isomerase (Gstz1), found in Mus musculus (Mouse).